The chain runs to 142 residues: Putative nickel-responsive regulator (142 aa).

The Ni(2+) site is built by H77, H88, H90, and C96.

Belongs to the transcriptional regulatory CopG/NikR family. As to quaternary structure, homotetramer. It depends on Ni(2+) as a cofactor.

In terms of biological role, transcriptional regulator. The protein is Putative nickel-responsive regulator of Halobacterium salinarum (strain ATCC 700922 / JCM 11081 / NRC-1) (Halobacterium halobium).